Reading from the N-terminus, the 578-residue chain is DNA primase (578 aa).

The segment at 40–64 (CPFHQEKTPSFTVNFEKQFYFCFGC) adopts a CHC2-type zinc-finger fold. The Toprim domain maps to 257–339 (KQILIVEGYV…GKNVKFIFLP (83 aa)). Mg(2+) contacts are provided by E263, D307, and D309.

This sequence belongs to the DnaG primase family. Monomer. Interacts with DnaB. It depends on Zn(2+) as a cofactor. Mg(2+) is required as a cofactor.

The enzyme catalyses ssDNA + n NTP = ssDNA/pppN(pN)n-1 hybrid + (n-1) diphosphate.. In terms of biological role, RNA polymerase that catalyzes the synthesis of short RNA molecules used as primers for DNA polymerase during DNA replication. In Buchnera aphidicola subsp. Baizongia pistaciae (strain Bp), this protein is DNA primase.